The primary structure comprises 152 residues: MIALLQRVSQARVEVGGRRVGEIGPGLLVLVCAEPSDTGAVADKLVERLLKLRVFSDDAGKMNRSVVEAGGGLLIVSQFTLAADCSGGNRPSFSGAAPAEQGRVLYERLLATARSRHTPVECGEFGADMQVLLVNDGPVTIPLVVGHDKLRP.

The Gly-cisPro motif, important for rejection of L-amino acids motif lies at 137–138; that stretch reads GP.

This sequence belongs to the DTD family. In terms of assembly, homodimer.

The protein localises to the cytoplasm. The catalysed reaction is glycyl-tRNA(Ala) + H2O = tRNA(Ala) + glycine + H(+). The enzyme catalyses a D-aminoacyl-tRNA + H2O = a tRNA + a D-alpha-amino acid + H(+). Its function is as follows. An aminoacyl-tRNA editing enzyme that deacylates mischarged D-aminoacyl-tRNAs. Also deacylates mischarged glycyl-tRNA(Ala), protecting cells against glycine mischarging by AlaRS. Acts via tRNA-based rather than protein-based catalysis; rejects L-amino acids rather than detecting D-amino acids in the active site. By recycling D-aminoacyl-tRNA to D-amino acids and free tRNA molecules, this enzyme counteracts the toxicity associated with the formation of D-aminoacyl-tRNA entities in vivo and helps enforce protein L-homochirality. The sequence is that of D-aminoacyl-tRNA deacylase from Methylibium petroleiphilum (strain ATCC BAA-1232 / LMG 22953 / PM1).